A 514-amino-acid chain; its full sequence is AAA-ATPase ASD, mitochondrial (514 aa).

The helical transmembrane segment at 7 to 24 threads the bilayer; it reads VWTNTGSALASLVFIYTI. Position 250–257 (250–257) interacts with ATP; sequence GPPGTGKS. Disordered stretches follow at residues 311-342 and 467-514; these read GQRK…ENKG and KEEA…TMKD. Composition is skewed to basic and acidic residues over residues 331-342 and 467-502; these read KQMKKDQGENKG and KEEA…KEEK.

The protein belongs to the AAA ATPase family. BCS1 subfamily. Requires Mg(2+) as cofactor. As to expression, expressed in seeds, specifically in the embryo.

It is found in the mitochondrion membrane. It carries out the reaction ATP + H2O = ADP + phosphate + H(+). Its function is as follows. Required to regulate morphology and anatomy during seed maturation. This Arabidopsis thaliana (Mouse-ear cress) protein is AAA-ATPase ASD, mitochondrial (AATP1).